A 567-amino-acid polypeptide reads, in one-letter code: Dihydroxy-acid dehydratase (567 aa).

Cysteine 52 contacts [2Fe-2S] cluster. Position 84 (aspartate 84) interacts with Mg(2+). Cysteine 125 lines the [2Fe-2S] cluster pocket. Mg(2+) contacts are provided by aspartate 126 and lysine 127. Lysine 127 carries the N6-carboxylysine modification. Cysteine 197 is a [2Fe-2S] cluster binding site. Glutamate 448 lines the Mg(2+) pocket. Serine 474 (proton acceptor) is an active-site residue.

It belongs to the IlvD/Edd family. As to quaternary structure, homodimer. Requires [2Fe-2S] cluster as cofactor. The cofactor is Mg(2+).

The enzyme catalyses (2R)-2,3-dihydroxy-3-methylbutanoate = 3-methyl-2-oxobutanoate + H2O. It carries out the reaction (2R,3R)-2,3-dihydroxy-3-methylpentanoate = (S)-3-methyl-2-oxopentanoate + H2O. The protein operates within amino-acid biosynthesis; L-isoleucine biosynthesis; L-isoleucine from 2-oxobutanoate: step 3/4. It functions in the pathway amino-acid biosynthesis; L-valine biosynthesis; L-valine from pyruvate: step 3/4. Functionally, functions in the biosynthesis of branched-chain amino acids. Catalyzes the dehydration of (2R,3R)-2,3-dihydroxy-3-methylpentanoate (2,3-dihydroxy-3-methylvalerate) into 2-oxo-3-methylpentanoate (2-oxo-3-methylvalerate) and of (2R)-2,3-dihydroxy-3-methylbutanoate (2,3-dihydroxyisovalerate) into 2-oxo-3-methylbutanoate (2-oxoisovalerate), the penultimate precursor to L-isoleucine and L-valine, respectively. The sequence is that of Dihydroxy-acid dehydratase from Streptococcus pneumoniae (strain CGSP14).